A 164-amino-acid chain; its full sequence is Transcription antitermination protein NusB (164 aa).

The protein belongs to the NusB family.

Involved in transcription antitermination. Required for transcription of ribosomal RNA (rRNA) genes. Binds specifically to the boxA antiterminator sequence of the ribosomal RNA (rrn) operons. In Chlorobaculum parvum (strain DSM 263 / NCIMB 8327) (Chlorobium vibrioforme subsp. thiosulfatophilum), this protein is Transcription antitermination protein NusB.